The chain runs to 65 residues: Large ribosomal subunit protein bL35 (65 aa).

It belongs to the bacterial ribosomal protein bL35 family.

The sequence is that of Large ribosomal subunit protein bL35 from Synechococcus sp. (strain CC9311).